The sequence spans 171 residues: ATP synthase subunit b (171 aa).

A helical membrane pass occupies residues 2-22 (FVVKMVLGFLILLSPLCATGL).

The protein belongs to the ATPase B chain family. As to quaternary structure, F-type ATPases have 2 components, F(1) - the catalytic core - and F(0) - the membrane proton channel. F(1) has five subunits: alpha(3), beta(3), gamma(1), delta(1), epsilon(1). F(0) has three main subunits: a(1), b(2) and c(10-14). The alpha and beta chains form an alternating ring which encloses part of the gamma chain. F(1) is attached to F(0) by a central stalk formed by the gamma and epsilon chains, while a peripheral stalk is formed by the delta and b chains.

It localises to the cell inner membrane. F(1)F(0) ATP synthase produces ATP from ADP in the presence of a proton or sodium gradient. F-type ATPases consist of two structural domains, F(1) containing the extramembraneous catalytic core and F(0) containing the membrane proton channel, linked together by a central stalk and a peripheral stalk. During catalysis, ATP synthesis in the catalytic domain of F(1) is coupled via a rotary mechanism of the central stalk subunits to proton translocation. Its function is as follows. Component of the F(0) channel, it forms part of the peripheral stalk, linking F(1) to F(0). This Helicobacter pylori (strain G27) protein is ATP synthase subunit b.